We begin with the raw amino-acid sequence, 697 residues long: MFS antiporter QDR3 (697 aa).

The Cytoplasmic segment spans residues 1–141 (MSHSPNLSPQ…ARDYPNKIKY (141 aa)). The disordered stretch occupies residues 38–109 (HPIGHHGREQ…KPTSTSIKTN (72 aa)). 2 stretches are compositionally biased toward low complexity: residues 53 to 69 (NTTK…HTTT) and 85 to 99 (DLSS…YLSQ). Residues 142-162 (LIVFIIAFASLAGPFGTSVML) traverse the membrane as a helical segment. Topologically, residues 163–180 (PAIDDIVNDLNTNVSTVN) are extracellular. N175 and N180 each carry an N-linked (GlcNAc...) asparagine glycan. Residues 181–201 (VSVGIYLLSLGIFPLWWSSFS) form a helical membrane-spanning segment. Topologically, residues 202 to 215 (ERFGRRSVYMVSFT) are cytoplasmic. A helical transmembrane segment spans residues 216-236 (LFVAFSIGTALSPNIAALIVL). Topologically, residues 237–240 (RVLQ) are extracellular. A helical membrane pass occupies residues 241–261 (GGSSASVQAVGAGTIADLFIP). Residues 262 to 268 (QERGQAM) lie on the Cytoplasmic side of the membrane. Residues 269-289 (GLYYLGPLAGPFLAPILGGAV) traverse the membrane as a helical segment. Topologically, residues 290 to 296 (SQAWGWR) are extracellular. The chain crosses the membrane as a helical span at residues 297–317 (ATQWLLMIISACSFVLITFFL). At 318–485 (PETLRRVDTI…SIILLKHPPV (168 aa)) the chain is on the cytoplasmic side. Residues 338–367 (DNNGSQNEKIHDDFAGADNSSVHDIDGNPI) form a disordered region. The helical transmembrane segment at 486–506 (VLVISFSAISFAAIYFFNMAI) threads the bilayer. The Extracellular segment spans residues 507–519 (SYEYARSPYNFSS). N516 is a glycosylation site (N-linked (GlcNAc...) asparagine). A helical membrane pass occupies residues 520-540 (VILGLMYIPNSVTYFMASIIG). Over 541–565 (GKWNDRLLNRYAQKHGELVPESRLS) the chain is Cytoplasmic. Residues 566–586 (WNIVVAIILYPMACLIFGWTI) form a helical membrane-spanning segment. Topologically, residues 587-590 (KYRE) are extracellular. The helical transmembrane segment at 591–611 (FWVIPLIGTALFGFASMLVIG) threads the bilayer. Over 612–626 (ATVTYLVDSLPGKGA) the chain is Cytoplasmic. A helical transmembrane segment spans residues 627–647 (TGVALNNLIRQILAAIATFIV). At 648–653 (EPLLRA) the chain is on the extracellular side. A helical membrane pass occupies residues 654–674 (IGAGVLFSIIAGILLVSSLVL). Over 675–697 (LYLKKRGAFFREHYDVMDLYAKL) the chain is Cytoplasmic.

It belongs to the major facilitator superfamily. CAR1 family.

Its subcellular location is the cell membrane. In terms of biological role, MFS antiporter that does not display functional linkage as drug transporter and performs functions that significantly affect biofilm development and virulence. No substrate for transport has been identified yet, but plays an important role in the growth in the host. The protein is MFS antiporter QDR3 (QDR3) of Candida albicans (strain SC5314 / ATCC MYA-2876) (Yeast).